The sequence spans 434 residues: Enolase (434 aa).

Residue glutamine 163 participates in (2R)-2-phosphoglycerate binding. Catalysis depends on glutamate 205, which acts as the Proton donor. Mg(2+) is bound by residues aspartate 242, glutamate 291, and aspartate 318. 4 residues coordinate (2R)-2-phosphoglycerate: lysine 343, arginine 372, serine 373, and lysine 394. Lysine 343 functions as the Proton acceptor in the catalytic mechanism.

Belongs to the enolase family. Mg(2+) serves as cofactor.

The protein resides in the cytoplasm. The protein localises to the secreted. It is found in the cell surface. It catalyses the reaction (2R)-2-phosphoglycerate = phosphoenolpyruvate + H2O. Its pathway is carbohydrate degradation; glycolysis; pyruvate from D-glyceraldehyde 3-phosphate: step 4/5. Catalyzes the reversible conversion of 2-phosphoglycerate (2-PG) into phosphoenolpyruvate (PEP). It is essential for the degradation of carbohydrates via glycolysis. This chain is Enolase, found in Streptococcus thermophilus (strain CNRZ 1066).